The chain runs to 119 residues: ATP-dependent Clp protease adapter protein ClpS (119 aa).

A disordered region spans residues 1 to 24 (MGPESPDSIPPHGPGNGDGDQDLD).

The protein belongs to the ClpS family. Binds to the N-terminal domain of the chaperone ClpA.

Its function is as follows. Involved in the modulation of the specificity of the ClpAP-mediated ATP-dependent protein degradation. The chain is ATP-dependent Clp protease adapter protein ClpS from Gluconobacter oxydans (strain 621H) (Gluconobacter suboxydans).